The following is a 376-amino-acid chain: METAGKVIKCKAAVAWEPGKPLSIEEVEVAPPNAHEVRIKLFATGVCHTDAYTLSGSDPEGLFPVILGHEGAGTVESVGEGVTKFKPGDTVIPLYVPQCGECKFCKNPKTNLCQKIRITQGQGLLPDKTSRFTCKGKQVFHFMGTSTFSEYTVVADISLAKVNEKAPMDKVCLLGCGISTGYGAALNTAKVEPGSTCAVFGLGAVGLAVIMGCKVAGATRIIGIDLNPAKFETAKEFGATEFVNPKDHSKPIQEVLVEMTDGGVDYSFECIGNVQIMRAALEACHKGWGESVIIGVAGAGQEISTRPFQLVTGRVWKGTAFGGWKSVESVPKLVEDYMSKKLKVDEFVTHTLPFEKINEGFELMHAGKSIRTVLTF.

Zn(2+)-binding residues include Cys47, His69, Cys99, Cys102, Cys105, Cys113, and Cys176.

The protein belongs to the zinc-containing alcohol dehydrogenase family. Class-III subfamily. In terms of assembly, homodimer. Zn(2+) is required as a cofactor. Expressed in the skeletal muscle, heart, gill filaments and liver, with highest levels in the kidney.

The protein resides in the cytoplasm. The enzyme catalyses a primary alcohol + NAD(+) = an aldehyde + NADH + H(+). It catalyses the reaction a secondary alcohol + NAD(+) = a ketone + NADH + H(+). The catalysed reaction is S-(hydroxymethyl)glutathione + NADP(+) = S-formylglutathione + NADPH + H(+). It carries out the reaction S-(hydroxymethyl)glutathione + NAD(+) = S-formylglutathione + NADH + H(+). The enzyme catalyses S-nitrosoglutathione + NADH + H(+) = S-(hydroxysulfenamide)glutathione + NAD(+). Class-III ADH is remarkably ineffective in oxidizing ethanol, but it readily catalyzes the oxidation of long-chain primary alcohols and the oxidation of S-(hydroxymethyl) glutathione. Also acts as a S-nitroso-glutathione reductase by catalyzing the NADH-dependent reduction of S-nitrosoglutathione, thereby regulating protein S-nitrosylation. The sequence is that of Alcohol dehydrogenase class-3 from Sparus aurata (Gilthead sea bream).